A 411-amino-acid polypeptide reads, in one-letter code: MATINDNYLKLKAGYLFPEIARRVNTFIEANPEAKIIKLGIGDVTEPLPEACRTAMIKAVEDMGDRSSFKGYGPEQGYGWLREKIAAQDFQARGCDIDASEIFVSDGAKCDTGNILDIFGKNNKIAVTDPVYPVYVDTNVMAGHTGETNEKGEYEGLVYLPISADNHFVADIPSEKVDLIYLCFPNNPTGATATKEYLKAWVDYATANDSIIFFDAAYEAFITDESLPHSIYEIEGAKDCAIEFRSFSKNAGFTGTRCAFTVVPKQLTAKASDGSQVELWKLWNRRQSTKFNGVSYIVQRGAEAVYSEAGKAQIKGLVSFYLENAKIICEQLKSAGFEVYGGVNAPYIWLKTPHNLSSWDFFDKLLQTTHVVGTPGSGFGAAGEGYFRISAFNSRENVEEAMKRITQAFKV.

2 residues coordinate substrate: Tyr15 and Gly42. Residues Tyr72, Ala108–Lys109, Tyr132, Asn187, Tyr218, and Ser246–Ser248 contribute to the pyridoxal 5'-phosphate site. Residues Lys109, Tyr132, and Asn187 each coordinate substrate. N6-(pyridoxal phosphate)lysine is present on Lys249. Residues Arg257 and Asn292 each contribute to the pyridoxal 5'-phosphate site. Asn292 and Arg388 together coordinate substrate.

It belongs to the class-I pyridoxal-phosphate-dependent aminotransferase family. LL-diaminopimelate aminotransferase subfamily. In terms of assembly, homodimer. It depends on pyridoxal 5'-phosphate as a cofactor.

It carries out the reaction (2S,6S)-2,6-diaminopimelate + 2-oxoglutarate = (S)-2,3,4,5-tetrahydrodipicolinate + L-glutamate + H2O + H(+). It functions in the pathway amino-acid biosynthesis; L-lysine biosynthesis via DAP pathway; LL-2,6-diaminopimelate from (S)-tetrahydrodipicolinate (aminotransferase route): step 1/1. Functionally, involved in the synthesis of meso-diaminopimelate (m-DAP or DL-DAP), required for both lysine and peptidoglycan biosynthesis. Catalyzes the direct conversion of tetrahydrodipicolinate to LL-diaminopimelate. This is LL-diaminopimelate aminotransferase from Crocosphaera subtropica (strain ATCC 51142 / BH68) (Cyanothece sp. (strain ATCC 51142)).